A 282-amino-acid polypeptide reads, in one-letter code: Protoheme IX farnesyltransferase (282 aa).

The next 9 membrane-spanning stretches (helical) occupy residues 13–33, 36–56, 74–96, 101–120, 129–149, 156–176, 207–227, 232–252, and 261–281; these read VAGM…GAAG, MVTS…FNQI, ASGR…PALI, AGGV…YNGV, AFSL…GWLA, SPEI…HFWL, LWYA…FIAE, IAVC…LASP, and VSML…SGII.

The protein belongs to the UbiA prenyltransferase family. Protoheme IX farnesyltransferase subfamily.

It is found in the cell inner membrane. It catalyses the reaction heme b + (2E,6E)-farnesyl diphosphate + H2O = Fe(II)-heme o + diphosphate. It participates in porphyrin-containing compound metabolism; heme O biosynthesis; heme O from protoheme: step 1/1. Its function is as follows. Converts heme B (protoheme IX) to heme O by substitution of the vinyl group on carbon 2 of heme B porphyrin ring with a hydroxyethyl farnesyl side group. The protein is Protoheme IX farnesyltransferase of Oleidesulfovibrio alaskensis (strain ATCC BAA-1058 / DSM 17464 / G20) (Desulfovibrio alaskensis).